The following is a 234-amino-acid chain: Probable transcriptional regulatory protein PFL_3960 (234 aa).

The protein belongs to the TACO1 family.

It is found in the cytoplasm. The sequence is that of Probable transcriptional regulatory protein PFL_3960 from Pseudomonas fluorescens (strain ATCC BAA-477 / NRRL B-23932 / Pf-5).